Reading from the N-terminus, the 468-residue chain is UDP-N-acetylmuramate--L-alanine ligase (468 aa).

112 to 118 (GTHGKTT) contributes to the ATP binding site.

The protein belongs to the MurCDEF family.

It is found in the cytoplasm. The enzyme catalyses UDP-N-acetyl-alpha-D-muramate + L-alanine + ATP = UDP-N-acetyl-alpha-D-muramoyl-L-alanine + ADP + phosphate + H(+). It participates in cell wall biogenesis; peptidoglycan biosynthesis. Cell wall formation. This is UDP-N-acetylmuramate--L-alanine ligase from Bordetella petrii (strain ATCC BAA-461 / DSM 12804 / CCUG 43448).